A 536-amino-acid polypeptide reads, in one-letter code: Phosphoenolpyruvate carboxykinase (ATP) (536 aa).

Residues arginine 61, tyrosine 195, and lysine 201 each contribute to the substrate site. ATP-binding positions include lysine 201, histidine 220, and 236-244 (GLSGTGKTT). The Mn(2+) site is built by lysine 201 and histidine 220. Position 257 (aspartate 257) interacts with Mn(2+). ATP contacts are provided by glutamate 285, arginine 322, and threonine 447. Arginine 322 contributes to the substrate binding site.

It belongs to the phosphoenolpyruvate carboxykinase (ATP) family. The cofactor is Mn(2+).

The protein localises to the cytoplasm. It catalyses the reaction oxaloacetate + ATP = phosphoenolpyruvate + ADP + CO2. It functions in the pathway carbohydrate biosynthesis; gluconeogenesis. In terms of biological role, involved in the gluconeogenesis. Catalyzes the conversion of oxaloacetate (OAA) to phosphoenolpyruvate (PEP) through direct phosphoryl transfer between the nucleoside triphosphate and OAA. This is Phosphoenolpyruvate carboxykinase (ATP) from Agrobacterium fabrum (strain C58 / ATCC 33970) (Agrobacterium tumefaciens (strain C58)).